The primary structure comprises 286 residues: Beta-lactamase SHV-24 (286 aa).

The first 21 residues, 1 to 21 (MRYIRLCIISLLATLPLAVHA), serve as a signal peptide directing secretion. Ser66 acts as the Acyl-ester intermediate in catalysis. Residues Cys73 and Cys119 are joined by a disulfide bond. Glu164 (proton acceptor) is an active-site residue. Residue 230–232 (KTG) coordinates substrate.

This sequence belongs to the class-A beta-lactamase family.

The catalysed reaction is a beta-lactam + H2O = a substituted beta-amino acid. Hydrolyzes ampicillin. Can also hydrolyze cephaloridine, aztreonam and ceftazidime with a low catalytic rate. The chain is Beta-lactamase SHV-24 (bla) from Escherichia coli.